Reading from the N-terminus, the 339-residue chain is Glycerol-3-phosphate dehydrogenase [NAD(P)+] (339 aa).

Residues Ser-13, Trp-14, and Lys-108 each contribute to the NADPH site. The sn-glycerol 3-phosphate site is built by Lys-108, Gly-139, and Ser-141. Residue Ala-143 participates in NADPH binding. Lys-194, Asp-247, Ser-257, Arg-258, and Asn-259 together coordinate sn-glycerol 3-phosphate. Lys-194 functions as the Proton acceptor in the catalytic mechanism. Arg-258 is a binding site for NADPH. NADPH is bound by residues Val-282 and Glu-284.

This sequence belongs to the NAD-dependent glycerol-3-phosphate dehydrogenase family.

Its subcellular location is the cytoplasm. It catalyses the reaction sn-glycerol 3-phosphate + NAD(+) = dihydroxyacetone phosphate + NADH + H(+). The enzyme catalyses sn-glycerol 3-phosphate + NADP(+) = dihydroxyacetone phosphate + NADPH + H(+). It functions in the pathway membrane lipid metabolism; glycerophospholipid metabolism. Functionally, catalyzes the reduction of the glycolytic intermediate dihydroxyacetone phosphate (DHAP) to sn-glycerol 3-phosphate (G3P), the key precursor for phospholipid synthesis. The chain is Glycerol-3-phosphate dehydrogenase [NAD(P)+] from Streptococcus equi subsp. equi (strain 4047).